We begin with the raw amino-acid sequence, 212 residues long: Redox-sensing transcriptional repressor Rex (212 aa).

A DNA-binding region (H-T-H motif) is located at residues 17–56; the sequence is LYARSLRYLLEEGIHSVSSQELGERINVTAAQIRKDLSYF. An NAD(+)-binding site is contributed by 91 to 96; the sequence is GIGLLG.

This sequence belongs to the transcriptional regulatory Rex family. Homodimer.

The protein resides in the cytoplasm. Its function is as follows. Modulates transcription in response to changes in cellular NADH/NAD(+) redox state. In Chloroflexus aggregans (strain MD-66 / DSM 9485), this protein is Redox-sensing transcriptional repressor Rex.